The following is a 1133-amino-acid chain: MWSLLLLAALVGQGFALKNVFDMRIQCPHSVKFGETSVSGYTELPPLSLQEAEQLVPESSCNMDNHQSLSTINKLTKVIWRKKANQESANQNSFELMESEVSFKGLCMLKHRMVEESYRNRRSVICYDLACNSTFCKPTVYMIVPIHACNMMKSCLIGLGPYRVQVVYERTYCTTGILTEGKCFVPDKAVVSALKRGMYAIASIETICFFIHQKGNTYKIVTAITSAMGSKCNNTDTKVQGYYICIIGGNSAPVYAPAGEDFRAMEVFSGIITSPHGEDHDLPGEEIATYQISGQIEAKIPHTVSSKNLKLTAFAGIPSYSSTSILTASEDGRFIFSPGLFPNLNQSVCDNNALPLIWRGLIDLTGYYEAVHPCNVFCVLSGPGASCEAFSEGGIFNITSPMCLVSKQNRFRAAEQQISFVCQRVDMDIIVYCNGQKKTILTKTLVIGQCIYTITSLFSLLPGVAHSIAIELCVPGFHGWATAALLITFCFGWVLIPACTLAILLVLKFFANILHTSNQENRFKAILRKIKEEFEKTKGSMVCEICKYECETLKELKAHNLSCVQGECPYCFTHCEPTETAIQAHYKVCQATHRFREDLKKTVTPQNIGPGCYRTLNLFRYKSRCYILTMWTLLLIIESILWAASAAEIPLVPLWTDNAHGVGSVPMHTDLELDFSLPSSSRYTYKRHLTNPVNDQQSVSLHIEIESQGIGADVHHLGHWYDARLNLKTSFHCYGACTKYQYPWHTAKCHFEKDYEYENSWACNPPDCPGVGTGCTACGLYLDQLKPVGTAFKIISVRYSRKVCVQFGEEYLCKTIDMNDCFVTRHAKICIIGTVSKFSQGDTLLFLGPMEGGGIIFKHWCTSTCHFGDPGDVMGPKDKPFICPEFPGQFRKKCNFATTPVCEYDGNIISGYKKVLATIDSFQSFNTSNIHFTDERIEWRDPDGMLRDHINIVISKDIDFENLAENPCKVGLQAANIEGAWGSGVGFTLTCQVSLTECPTFLTSIRACDMAICYGAESVTLSRGQNTVKITGKGGHSGSSFKCCHGKECSLTGLQASAPHLDKVNGISELENEKVYDDGAPECGITCWFKKSGEWVMGIINGNWVVLIVLCVLLLFSLILLSILCPVRKHKKS.

The signal sequence occupies residues 1–17 (MWSLLLLAALVGQGFAL). Residues 18 to 484 (KNVFDMRIQC…PGFHGWATAA (467 aa)) lie on the Lumenal side of the membrane. 11 disulfide bridges follow: cysteine 27-cysteine 149, cysteine 61-cysteine 155, cysteine 107-cysteine 126, cysteine 131-cysteine 136, cysteine 173-cysteine 183, cysteine 208-cysteine 245, cysteine 232-cysteine 349, cysteine 374-cysteine 433, cysteine 378-cysteine 387, cysteine 403-cysteine 422, and cysteine 450-cysteine 473. A glycan (N-linked (GlcNAc...) asparagine; by host) is linked at asparagine 132. 2 N-linked (GlcNAc...) asparagine; by host glycosylation sites follow: asparagine 233 and asparagine 345. Residue asparagine 397 is glycosylated (N-linked (GlcNAc...) asparagine; by host). The chain crosses the membrane as a helical span at residues 485-504 (LLITFCFGWVLIPACTLAIL). Over 505-626 (LVLKFFANIL…NLFRYKSRCY (122 aa)) the chain is Cytoplasmic. The interval 514-531 (LHTSNQENRFKAILRKIK) is binding to the ribonucleoprotein. 2 CCHC-type zinc fingers span residues 543–563 (CEIC…NLSC) and 568–589 (CPYC…YKVC). 3 binding to the ribonucleoprotein regions span residues 586-603 (YKVC…KKTV), 590-601 (QATHRFREDLKK), and 609-623 (GPGC…RYKS). Residues 609–632 (GPGCYRTLNLFRYKSRCYILTMWT) enclose the ITAM domain. The short motif at 613–616 (YRTL) is the YxxL element. Residues 627-647 (ILTMWTLLLIIESILWAASAA) form a helical membrane-spanning segment. Topologically, residues 648–1104 (EIPLVPLWTD…WVMGIINGNW (457 aa)) are lumenal. Cystine bridges form between cysteine 733–cysteine 768, cysteine 737–cysteine 775, cysteine 749–cysteine 883, cysteine 763–cysteine 894, cysteine 778–cysteine 902, cysteine 804–cysteine 813, cysteine 821–cysteine 830, and cysteine 861–cysteine 865. A fusion loop region spans residues 755–775 (YEYENSWACNPPDCPGVGTGC). N-linked (GlcNAc...) asparagine; by host glycosylation is present at asparagine 926. 5 disulfide bridges follow: cysteine 968-cysteine 998, cysteine 991-cysteine 1043, cysteine 1008-cysteine 1013, cysteine 1044-cysteine 1049, and cysteine 1083-cysteine 1087. A helical membrane pass occupies residues 1105–1125 (VVLIVLCVLLLFSLILLSILC). A binding to the ribonucleoprotein region spans residues 1120-1133 (LLSILCPVRKHKKS). The Cytoplasmic segment spans residues 1126-1133 (PVRKHKKS).

Belongs to the hantavirus envelope glycoprotein family. Homodimer. Homotetramer; forms heterotetrameric Gn-Gc spikes in the pre-fusion conformation. Interacts (via C-terminus) with the nucleoprotein. Interacts with host TUFM; this interaction contributes to the virus-induced degradation of mitochondria by autophagy, which leads to degradation of host MAVS and inhibition of type I interferon (IFN) responses. Interacts with host MAP1LC3B; this interaction contributes to the virus-induced degradation of mitochondria by autophagy, which leads to degradation of host MAVS and inhibition of type I interferon (IFN) responses. As to quaternary structure, homodimer. Homotetramer; forms heterotetrameric Gn-Gc spikes in the pre-fusion conformation. Homotrimer; forms homotrimer in the post-fusion conformation at acidic pH. Interacts (via C-terminus) with the nucleoprotein. Post-translationally, envelope polyprotein precursor is quickly cleaved in vivo just after synthesis, presumably by host signal peptidase.

The protein localises to the virion membrane. The protein resides in the host cell surface. It localises to the host Golgi apparatus membrane. It is found in the host endoplasmic reticulum membrane. Its subcellular location is the host mitochondrion. Forms homotetramers with glycoprotein C at the surface of the virion. Attaches the virion to host cell receptors including integrin ITGAV/ITGB3. This attachment induces virion internalization predominantly through clathrin-dependent endocytosis. Mediates the assembly and budding of infectious virus particles through its interaction with the nucleocapsid protein and the viral genome. May dysregulate normal immune and endothelial cell responses through an ITAM motif. Translocates to mitochondria, binds to host TUFM and recruits MAP1LC3B. These interactions induce mitochondrial autophagy and therefore destruction of host MAVS leading to inhibition of type I interferon (IFN) responses. Concomitant breakdown of glycoprotein N is apparently prevented by the nucleoprotein that may inhibit Gn-stimulated autophagosome-lysosome fusion. Interacts with the viral genomic RNA. In terms of biological role, forms homotetramers with glycoprotein N at the surface of the virion. Attaches the virion to host cell receptors including integrin ITGAV/ITGB3. This attachment induces virion internalization predominantly through clathrin-dependent endocytosis. Class II fusion protein that promotes fusion of viral membrane with host endosomal membrane after endocytosis of the virion. The polypeptide is Envelopment polyprotein (GP) (Homo sapiens (Human)).